The primary structure comprises 663 residues: NAD(P)H-quinone oxidoreductase subunit 5, chloroplastic (663 aa).

Transmembrane regions (helical) follow at residues 11–31 (WLIP…LISF), 41–61 (LYGL…MNLL), 89–109 (FFID…AVLV), 126–146 (FFAY…SPNL), 149–169 (IYIF…FWFT), 189–209 (FCLL…DFIT), 224–244 (HLYF…AKSA), 260–280 (TPIS…FLVA), 292–312 (IMNL…TIAL), 329–349 (LGYM…FHLV), 398–418 (FTFL…CFWS), 436–456 (IAWI…LLAF), 482–502 (LYML…GFIS), 528–548 (ILLN…AYSI), 607–627 (WLFD…GQSL), and 635–655 (VSSY…FLPL).

It belongs to the complex I subunit 5 family. As to quaternary structure, NDH is composed of at least 16 different subunits, 5 of which are encoded in the nucleus.

The protein resides in the plastid. It localises to the chloroplast thylakoid membrane. The catalysed reaction is a plastoquinone + NADH + (n+1) H(+)(in) = a plastoquinol + NAD(+) + n H(+)(out). The enzyme catalyses a plastoquinone + NADPH + (n+1) H(+)(in) = a plastoquinol + NADP(+) + n H(+)(out). In terms of biological role, NDH shuttles electrons from NAD(P)H:plastoquinone, via FMN and iron-sulfur (Fe-S) centers, to quinones in the photosynthetic chain and possibly in a chloroplast respiratory chain. The immediate electron acceptor for the enzyme in this species is believed to be plastoquinone. Couples the redox reaction to proton translocation, and thus conserves the redox energy in a proton gradient. The chain is NAD(P)H-quinone oxidoreductase subunit 5, chloroplastic (ndhF) from Chara vulgaris (Common stonewort).